A 247-amino-acid polypeptide reads, in one-letter code: MQIKHNLLDIEGTTAPIAFVHQILFPYATKNIHRFLKEYQLTELQWKEVQTEFQKDTSSGDPLFIEKFRIKNVPSGLIVNEVPNTLSKDMVSVYFEYLIEKDRKFGPLKEIQGKIWKEGYESGEIKSTVFDDVPKFLNDAIQSGIQNHVYSSGSVEAQHLIYQYSVLGDLRQYFTMYFDTAVGGKREKTSYERIASTLAVSPSEIRFFTDIVEEAEAANATGMDVVILNRPGNLAQKPHPFPVWEHF.

It belongs to the HAD-like hydrolase superfamily. MasA/MtnC family. In terms of assembly, monomer. Mg(2+) is required as a cofactor.

It carries out the reaction 5-methylsulfanyl-2,3-dioxopentyl phosphate + H2O = 1,2-dihydroxy-5-(methylsulfanyl)pent-1-en-3-one + phosphate. It functions in the pathway amino-acid biosynthesis; L-methionine biosynthesis via salvage pathway; L-methionine from S-methyl-5-thio-alpha-D-ribose 1-phosphate: step 3/6. The protein operates within amino-acid biosynthesis; L-methionine biosynthesis via salvage pathway; L-methionine from S-methyl-5-thio-alpha-D-ribose 1-phosphate: step 4/6. Bifunctional enzyme that catalyzes the enolization of 2,3-diketo-5-methylthiopentyl-1-phosphate (DK-MTP-1-P) into the intermediate 2-hydroxy-3-keto-5-methylthiopentenyl-1-phosphate (HK-MTPenyl-1-P), which is then dephosphorylated to form the acireductone 1,2-dihydroxy-3-keto-5-methylthiopentene (DHK-MTPene). This chain is Enolase-phosphatase E1, found in Leptospira biflexa serovar Patoc (strain Patoc 1 / Ames).